We begin with the raw amino-acid sequence, 428 residues long: Flap endonuclease 1-B (428 aa).

The segment at 1–132 (MGIKGLTKVL…KELAKRSLKR (132 aa)) is N-domain. Asp34 contacts Mg(2+). Arg98 serves as a coordination point for DNA. Residues Asp114, Glu186, Glu188, Asp207, and Asp209 each coordinate Mg(2+). The interval 150–281 (AVEKFSKRTV…QRALKLIRQH (132 aa)) is I-domain. DNA is bound at residue Glu186. DNA-binding residues include Gly259 and Asp261. Residue Asp261 coordinates Mg(2+).

The protein belongs to the XPG/RAD2 endonuclease family. FEN1 subfamily. In terms of assembly, interacts with PCNA. Three molecules of FEN1 bind to one PCNA trimer with each molecule binding to one PCNA monomer. PCNA stimulates the nuclease activity without altering cleavage specificity. It depends on Mg(2+) as a cofactor. Post-translationally, phosphorylated. Phosphorylation upon DNA damage induces relocalization to the nuclear plasma.

The protein resides in the nucleus. Its subcellular location is the nucleolus. It is found in the nucleoplasm. It localises to the mitochondrion. In terms of biological role, structure-specific nuclease with 5'-flap endonuclease and 5'-3' exonuclease activities involved in DNA replication and repair. During DNA replication, cleaves the 5'-overhanging flap structure that is generated by displacement synthesis when DNA polymerase encounters the 5'-end of a downstream Okazaki fragment. It enters the flap from the 5'-end and then tracks to cleave the flap base, leaving a nick for ligation. Also involved in the long patch base excision repair (LP-BER) pathway, by cleaving within the apurinic/apyrimidinic (AP) site-terminated flap. Acts as a genome stabilization factor that prevents flaps from equilibrating into structures that lead to duplications and deletions. Also possesses 5'-3' exonuclease activity on nicked or gapped double-stranded DNA, and exhibits RNase H activity. Also involved in replication and repair of rDNA and in repairing mitochondrial DNA. In Sorghum bicolor (Sorghum), this protein is Flap endonuclease 1-B.